The chain runs to 401 residues: Heat shock transcription factor, Y-linked (401 aa).

Residues 1–11 show a composition bias toward polar residues; the sequence is MAHVSSETQDV. The segment at 1–30 is disordered; that stretch reads MAHVSSETQDVSPKDELTASEASTRSPLCE. Residues 76-194 mediate DNA binding; that stretch reads LSLNFPRKLW…PQLLVRVKRR (119 aa).

The protein belongs to the HSF family. In terms of tissue distribution, testis-specific. Present in Sertoli cells and spermatogenic cells (at protein level).

It is found in the nucleus. It localises to the cytoplasm. The sequence is that of Heat shock transcription factor, Y-linked (HSFY1) from Homo sapiens (Human).